Here is a 241-residue protein sequence, read N- to C-terminus: DNA-binding dual master transcriptional regulator RpaA (241 aa).

Residues 3–119 (RILIIDDDPA…EMLARVRALL (117 aa)) form the Response regulatory domain. Residue Asp52 is modified to 4-aspartylphosphate. A DNA-binding region (ompR/PhoB-type) is located at residues 132–231 (SEILNQGPLT…VYGAGYCLEL (100 aa)).

As to quaternary structure, interacts with reduced ferredoxin (petF). Interacts with CikA, RpaB, SasA, Sll0038 (pixG) and a number of other proteins. In terms of processing, phosphorylated by SasA; phosphorylation is maximal when KaiC phosphorylation is active during the circadian cycle. Dephosphorylated by CikA. CikA and SasA cooperation generates RpaA activity oscillation that is distinct from that generated by CikA or SasA alone and offset from the rhythm of KaiC phosphorylation.

The protein resides in the cytoplasm. Functionally, response regulator of 2 two-component regulatory systems SasA/RpaA and CikA/RpaA involved in genome-wide circadian gene expression. The histidine kinases have opposing effects modulated by the clock oscillator proteins; SasA phosphorylates RpaA (stimulated by fully phosphorylated KaiC1) while CikA dephosphorylates phospho-RpaA (stimulated by the phospho-Ser-432-KaiC1-KaiB complex). The RpaA regulon is about 300 genes, and includes itself, cikA, sigE, sigG, genes involved in photosynthesis, carbon metabolism in the light and dark, phototaxis, CRISPR arrays 2 and 3 as well as nearly 90 ncRNAs. Genes are up- or down-regulated in its absence. Involved in regulation of primary sugar and amino acid metabolism and in adaptation to light changes. Regulates the accumulation of the monomeric photosystem I and the D1 protein under high light conditions. Overexpression causes cells to grow more slowly, increases levels of transcripts for clock oscillator genes in the light and the dark, increases levels of SigE protein, increases accumulation of sugar catabolic enzymes in the dark with concomitant decreases in most sugar metabolites. Plays a role in cell division; overexpression from the psbAII promoter increases expression of some cell-division-related genes, alters cell volume and changes the outer cell membrane and cell wall appearance. The polypeptide is DNA-binding dual master transcriptional regulator RpaA (Synechocystis sp. (strain ATCC 27184 / PCC 6803 / Kazusa)).